Consider the following 491-residue polypeptide: Protein nucleotidyltransferase YdiU (491 aa).

Gly-88, Gly-90, Arg-91, Lys-111, Asp-123, Gly-124, Arg-174, and Arg-181 together coordinate ATP. Catalysis depends on Asp-250, which acts as the Proton acceptor. The Mg(2+) site is built by Asn-251 and Asp-260. Residue Asp-260 coordinates ATP.

The protein belongs to the SELO family. It depends on Mg(2+) as a cofactor. Mn(2+) is required as a cofactor.

The enzyme catalyses L-seryl-[protein] + ATP = 3-O-(5'-adenylyl)-L-seryl-[protein] + diphosphate. The catalysed reaction is L-threonyl-[protein] + ATP = 3-O-(5'-adenylyl)-L-threonyl-[protein] + diphosphate. It carries out the reaction L-tyrosyl-[protein] + ATP = O-(5'-adenylyl)-L-tyrosyl-[protein] + diphosphate. It catalyses the reaction L-histidyl-[protein] + UTP = N(tele)-(5'-uridylyl)-L-histidyl-[protein] + diphosphate. The enzyme catalyses L-seryl-[protein] + UTP = O-(5'-uridylyl)-L-seryl-[protein] + diphosphate. The catalysed reaction is L-tyrosyl-[protein] + UTP = O-(5'-uridylyl)-L-tyrosyl-[protein] + diphosphate. In terms of biological role, nucleotidyltransferase involved in the post-translational modification of proteins. It can catalyze the addition of adenosine monophosphate (AMP) or uridine monophosphate (UMP) to a protein, resulting in modifications known as AMPylation and UMPylation. This chain is Protein nucleotidyltransferase YdiU, found in Rhodopseudomonas palustris (strain BisB18).